Reading from the N-terminus, the 383-residue chain is UPF0425 pyridoxal phosphate-dependent protein Msp_0916 (383 aa).

Lys207 is modified (N6-(pyridoxal phosphate)lysine).

It belongs to the UPF0425 family. The cofactor is pyridoxal 5'-phosphate.

This chain is UPF0425 pyridoxal phosphate-dependent protein Msp_0916, found in Methanosphaera stadtmanae (strain ATCC 43021 / DSM 3091 / JCM 11832 / MCB-3).